A 1141-amino-acid polypeptide reads, in one-letter code: Envelopment polyprotein (1141 aa).

The N-terminal stretch at 1 to 18 is a signal peptide; that stretch reads MGRLYLIVLGVLITATAG. Residues 19–483 are Lumenal-facing; it reads FPRSVHELKI…HSLAVELCVP (465 aa). Cystine bridges form between cysteine 30–cysteine 158, cysteine 64–cysteine 164, cysteine 113–cysteine 135, cysteine 140–cysteine 145, cysteine 182–cysteine 192, cysteine 217–cysteine 253, cysteine 242–cysteine 357, cysteine 382–cysteine 441, cysteine 386–cysteine 395, and cysteine 458–cysteine 481. N-linked (GlcNAc...) asparagine; by host glycosylation occurs at asparagine 141. Residue asparagine 353 is glycosylated (N-linked (GlcNAc...) asparagine; by host). N-linked (GlcNAc...) asparagine; by host glycosylation occurs at asparagine 405. The helical transmembrane segment at 484–506 threads the bilayer; that stretch reads GIHGWATIALVITFCFGWLLIPT. Topologically, residues 507–633 are cytoplasmic; that stretch reads TTMVVLKCLR…LGVFRYKSRC (127 aa). A binding to the ribonucleoprotein region spans residues 522–539; the sequence is CSHYSTESKFKVILEKVK. CCHC-type zinc fingers lie at residues 551–571 and 576–597; these read CDICHHECETAKELESHKKSC and CPYCMTITEATESALQAHYAVC. Binding to the ribonucleoprotein stretches follow at residues 594-611, 598-609, and 617-631; these read YAVCKLTGRFHEALKKSL, KLTGRFHEALKK, and QRGCYRTLGVFRYKS. The region spanning 617–640 is the ITAM domain; that stretch reads QRGCYRTLGVFRYKSRCYVGLVWM. Phosphotyrosine occurs at positions 621 and 634. The YxxL signature appears at 621 to 624; the sequence is YRTL. Residues 634–654 form a helical membrane-spanning segment; it reads YVGLVWMCLLTLELIVWAASA. Topologically, residues 655–1110 are lumenal; sequence DTPLLEPGWS…EWLLGILNGN (456 aa). Cystine bridges form between cysteine 741–cysteine 776, cysteine 745–cysteine 783, cysteine 757–cysteine 890, cysteine 771–cysteine 901, cysteine 786–cysteine 909, cysteine 812–cysteine 821, cysteine 829–cysteine 838, and cysteine 869–cysteine 873. Residues 763-783 form a fusion loop region; that stretch reads YQYETSWSCNPPDCPGVGTGC. The N-linked (GlcNAc...) asparagine; by host glycan is linked to asparagine 933. 5 disulfides stabilise this stretch: cysteine 975-cysteine 1005, cysteine 998-cysteine 1050, cysteine 1015-cysteine 1020, cysteine 1051-cysteine 1056, and cysteine 1090-cysteine 1094. A helical transmembrane segment spans residues 1111–1131; it reads WVVVAVLVIILLISIFLFSFF. The segment at 1127–1141 is binding to the ribonucleoprotein; that stretch reads LFSFFCPIRSHKKQL. Residues 1132-1141 are Cytoplasmic-facing; that stretch reads CPIRSHKKQL.

Belongs to the hantavirus envelope glycoprotein family. In terms of assembly, homodimer. Homotetramer; forms heterotetrameric Gn-Gc spikes in the pre-fusion conformation. Interacts (via C-terminus) with the nucleoprotein. Interacts with host TUFM; this interaction contributes to the virus-induced degradation of mitochondria by autophagy, which leads to degradation of host MAVS and inhibition of type I interferon (IFN) responses. Interacts with host MAP1LC3B; this interaction contributes to the virus-induced degradation of mitochondria by autophagy, which leads to degradation of host MAVS and inhibition of type I interferon (IFN) responses. As to quaternary structure, homodimer. Homotetramer; forms heterotetrameric Gn-Gc spikes in the pre-fusion conformation. Homotrimer; forms homotrimer in the post-fusion conformation at acidic pH. Interacts (via C-terminus) with the nucleoprotein. Post-translationally, envelope polyprotein precursor is quickly cleaved in vivo just after synthesis, presumably by host signal peptidase.

The protein resides in the virion membrane. It localises to the host cell surface. The protein localises to the host Golgi apparatus membrane. It is found in the host endoplasmic reticulum membrane. Its subcellular location is the host mitochondrion. Its function is as follows. Forms homotetramers with glycoprotein C at the surface of the virion. Attaches the virion to host cell receptors including integrin ITGAV/ITGB3. This attachment induces virion internalization predominantly through clathrin-dependent endocytosis. Mediates the assembly and budding of infectious virus particles through its interaction with the nucleocapsid protein and the viral genome. May dysregulate normal immune and endothelial cell responses through an ITAM motif. Translocates to mitochondria, binds to host TUFM and recruits MAP1LC3B. These interactions induce mitochondrial autophagy and therefore destruction of host MAVS leading to inhibition of type I interferon (IFN) responses. Concomitant breakdown of glycoprotein N is apparently prevented by the nucleoprotein that may inhibit Gn-stimulated autophagosome-lysosome fusion. Interacts with the viral genomic RNA. Functionally, forms homotetramers with glycoprotein N at the surface of the virion. Attaches the virion to host cell receptors including integrin ITGAV/ITGB3. This attachment induces virion internalization predominantly through clathrin-dependent endocytosis. Class II fusion protein that promotes fusion of viral membrane with host endosomal membrane after endocytosis of the virion. The chain is Envelopment polyprotein (GP) from Homo sapiens (Human).